Reading from the N-terminus, the 471-residue chain is A-type ATP synthase subunit B (471 aa).

This sequence belongs to the ATPase alpha/beta chains family. Has multiple subunits with at least A(3), B(3), C, D, E, F, H, I and proteolipid K(x).

It localises to the cell membrane. Component of the A-type ATP synthase that produces ATP from ADP in the presence of a proton gradient across the membrane. The B chain is a regulatory subunit. The polypeptide is A-type ATP synthase subunit B (Halobacterium salinarum (strain ATCC 29341 / DSM 671 / R1)).